The sequence spans 91 residues: DNA-directed RNA polymerase subunit Rpo11 (91 aa).

Belongs to the archaeal Rpo11/eukaryotic RPB11/RPC19 RNA polymerase subunit family. In terms of assembly, part of the RNA polymerase complex.

Its subcellular location is the cytoplasm. The enzyme catalyses RNA(n) + a ribonucleoside 5'-triphosphate = RNA(n+1) + diphosphate. DNA-dependent RNA polymerase (RNAP) catalyzes the transcription of DNA into RNA using the four ribonucleoside triphosphates as substrates. The chain is DNA-directed RNA polymerase subunit Rpo11 from Methanococcoides burtonii (strain DSM 6242 / NBRC 107633 / OCM 468 / ACE-M).